The chain runs to 816 residues: Phosphatidylinositol 4-kinase beta (816 aa).

3 disordered regions span residues 1 to 29 (MGDM…GGSL), 99 to 121 (EEED…RRRQ), and 250 to 318 (RKRE…SFSS). An N-acetylglycine modification is found at Gly-2. Residues 2–68 (GDMVVEPATL…VKLLHGGVAI (67 aa)) are interaction with ACBD3. The segment covering 10–29 (TLKPTSEPTPSPSGNNGGSL) has biased composition (low complexity). In terms of domain architecture, PIK helical spans 61–242 (LLHGGVAISS…GTKLRKLILS (182 aa)). A Phosphoserine modification is found at Ser-258. The residue at position 263 (Thr-263) is a Phosphothreonine. Phosphoserine is present on residues Ser-266, Ser-275, Ser-277, Ser-284, and Ser-294. 2 stretches are compositionally biased toward polar residues: residues 278-297 (DATA…SNPK) and 306-318 (SSST…SFSS). Residue Ser-428 is modified to Phosphoserine. Thr-438 bears the Phosphothreonine mark. Ser-511 bears the Phosphoserine mark. A phosphothreonine mark is found at Thr-517 and Thr-519. A PI3K/PI4K catalytic domain is found at 535-801 (EPWQEKVRRI…MVDGSMRSIT (267 aa)). Residues 541–547 (VRRIREG) form a G-loop region. A catalytic loop region spans residues 668–676 (QVKDRHNGN). An activation loop region spans residues 687-711 (HIDFGFILSSSPRNLGFETSAFKLT).

This sequence belongs to the PI3/PI4-kinase family. Type III PI4K subfamily. Interacts with ARF1 and ARF3 in the Golgi complex, but not with ARF4, ARF5 or ARF6. Interacts with NCS1/FREQ in a calcium-independent manner. Interacts with CALN1/CABP8 and CALN2/CABP7; in a calcium-dependent manner; this interaction competes with NCS1/FREQ binding. Interacts with ACBD3. Interacts with ARMH3, YWHAB, YWHAE, YWHAG, YWHAH, YWHAQ, YWHAZ and SFN. Interacts with GGA2 (via VHS domain); the interaction is important for PI4KB location at the Golgi apparatus membrane. Interacts with ATG9A. Requires Mg(2+) as cofactor. Mn(2+) serves as cofactor. As to expression, strongly expressed in brain, kidney, lung, small intestine, uterus and adrenal gland. Weaker expression in liver, heart, skeletal muscle, thymus and testis. Not detected in spleen.

The protein localises to the golgi apparatus. The protein resides in the endomembrane system. It is found in the mitochondrion outer membrane. It localises to the rough endoplasmic reticulum membrane. Its subcellular location is the golgi apparatus membrane. It catalyses the reaction a 1,2-diacyl-sn-glycero-3-phospho-(1D-myo-inositol) + ATP = a 1,2-diacyl-sn-glycero-3-phospho-(1D-myo-inositol 4-phosphate) + ADP + H(+). Inhibited by wortmannin. Increased kinase activity upon interaction with NCS1/FREQ. Phosphorylates phosphatidylinositol (PI) in the first committed step in the production of the second messenger inositol-1,4,5,-trisphosphate (PIP). May regulate Golgi disintegration/reorganization during mitosis, possibly via its phosphorylation. Involved in Golgi-to-plasma membrane trafficking. May play an important role in the inner ear development. The chain is Phosphatidylinositol 4-kinase beta (Pi4kb) from Rattus norvegicus (Rat).